A 197-amino-acid chain; its full sequence is Thymidine kinase (197 aa).

ATP-binding positions include 9–16 (AAMNAGKS) and 83–86 (DESQ). E84 (proton acceptor) is an active-site residue. C141, C143, C178, and C181 together coordinate Zn(2+).

It belongs to the thymidine kinase family. Homotetramer.

The protein localises to the cytoplasm. It carries out the reaction thymidine + ATP = dTMP + ADP + H(+). The polypeptide is Thymidine kinase (Albidiferax ferrireducens (strain ATCC BAA-621 / DSM 15236 / T118) (Rhodoferax ferrireducens)).